A 395-amino-acid polypeptide reads, in one-letter code: HORMA domain-containing protein 1 (395 aa).

The HORMA domain maps to 24 to 226 (QQSLVLVKRL…TPFHTFKVKV (203 aa)). A disordered region spans residues 329–395 (DVSESKTRSG…RKFSEPKEYV (67 aa)). A compositionally biased stretch (polar residues) spans 344-353 (KMANGNQPVK). Residues 354–363 (SSKENRKRNQ) show a composition bias toward basic and acidic residues. Ser-377 is modified (phosphoserine). A Nuclear localization signal motif is present at residues 384–387 (KRRK).

In terms of assembly, interacts with HORMAD2. Interacts with IHO1. Post-translationally, phosphorylated at Ser-378 in a SPO11-dependent manner.

It localises to the nucleus. It is found in the chromosome. In terms of biological role, plays a key role in meiotic progression. Regulates 3 different functions during meiosis: ensures that sufficient numbers of processed DNA double-strand breaks (DSBs) are available for successful homology search by increasing the steady-state numbers of single-stranded DSB ends. Promotes synaptonemal-complex formation independently of its role in homology search. Plays a key role in the male mid-pachytene checkpoint and the female meiotic prophase checkpoint: required for efficient build-up of ATR activity on unsynapsed chromosome regions, a process believed to form the basis of meiotic silencing of unsynapsed chromatin (MSUC) and meiotic prophase quality control in both sexes. The sequence is that of HORMA domain-containing protein 1 (HORMAD1) from Canis lupus familiaris (Dog).